Consider the following 278-residue polypeptide: uncharacterized protein (278 aa).

NAD(+)-binding positions include 112 to 113 (HI), 191 to 193 (VGR), and D217. Residue R193 is part of the active site. The active site involves E222. H241 functions as the Proton donor in the catalytic mechanism. Position 241-244 (241-244 (HSAG)) interacts with NAD(+).

It belongs to the D-isomer specific 2-hydroxyacid dehydrogenase family.

This is an uncharacterized protein from Streptomyces coelicolor.